A 239-amino-acid chain; its full sequence is Small ribosomal subunit protein uS3 (239 aa).

In terms of domain architecture, KH type-2 spans 39-107 (IRAALMKTLK…EVLINIVEVR (69 aa)). Residues 214–239 (AQDKKMAEQDHGGGGGDRRRRDRDAA) are disordered.

The protein belongs to the universal ribosomal protein uS3 family. As to quaternary structure, part of the 30S ribosomal subunit. Forms a tight complex with proteins S10 and S14.

Its function is as follows. Binds the lower part of the 30S subunit head. Binds mRNA in the 70S ribosome, positioning it for translation. The protein is Small ribosomal subunit protein uS3 of Methylocella silvestris (strain DSM 15510 / CIP 108128 / LMG 27833 / NCIMB 13906 / BL2).